Here is a 478-residue protein sequence, read N- to C-terminus: Pathogenicity cluster 5 protein d (478 aa).

A signal peptide spans 1-19 (MQIQNLIAALAGMAVVAEA). Disordered stretches follow at residues 35-89 (RQNK…GQAN) and 299-400 (NGGK…GGKG). A compositionally biased stretch (low complexity) spans 38–64 (KGGNNNNNNNNNNNNNNNNNKNNGGNN). The span at 65–89 (QLCLNPNNVQKGSQQAGTPKQGQAN) shows a compositional bias: polar residues. Over residues 316 to 326 (NNDGGGGGNDG) the composition is skewed to gly residues. Composition is skewed to low complexity over residues 327–348 (GNNS…QNGA) and 379–393 (TQAG…TNGN). 2 N-linked (GlcNAc...) asparagine glycosylation sites follow: N328 and N332.

The protein localises to the secreted. Functionally, secreted protein required for appressorial penetration of intact host epidermal cells and for pathogenicit, but not for subsequent biotrophic and necrotrophic colonization of leaves. This chain is Pathogenicity cluster 5 protein d, found in Colletotrichum graminicola (strain M1.001 / M2 / FGSC 10212) (Maize anthracnose fungus).